A 201-amino-acid chain; its full sequence is Dephospho-CoA kinase (201 aa).

One can recognise a DPCK domain in the interval 3–201 (ILGLTGGIGS…QIDSRVGCKI (199 aa)). 11-16 (GSGKSL) lines the ATP pocket.

Belongs to the CoaE family.

The protein resides in the cytoplasm. The enzyme catalyses 3'-dephospho-CoA + ATP = ADP + CoA + H(+). Its pathway is cofactor biosynthesis; coenzyme A biosynthesis; CoA from (R)-pantothenate: step 5/5. Functionally, catalyzes the phosphorylation of the 3'-hydroxyl group of dephosphocoenzyme A to form coenzyme A. The protein is Dephospho-CoA kinase of Ehrlichia ruminantium (strain Welgevonden).